We begin with the raw amino-acid sequence, 348 residues long: Anthranilate phosphoribosyltransferase (348 aa).

Residues Gly87, 90–91 (GD), Thr95, 97–100 (NIST), 115–123 (KHGNRSASG), and Ser127 each bind 5-phospho-alpha-D-ribose 1-diphosphate. Gly87 is a binding site for anthranilate. Ser99 lines the Mg(2+) pocket. Residue Asn118 participates in anthranilate binding. Arg173 provides a ligand contact to anthranilate. Positions 232 and 233 each coordinate Mg(2+).

Belongs to the anthranilate phosphoribosyltransferase family. In terms of assembly, homodimer. The cofactor is Mg(2+).

It catalyses the reaction N-(5-phospho-beta-D-ribosyl)anthranilate + diphosphate = 5-phospho-alpha-D-ribose 1-diphosphate + anthranilate. Its pathway is amino-acid biosynthesis; L-tryptophan biosynthesis; L-tryptophan from chorismate: step 2/5. Functionally, catalyzes the transfer of the phosphoribosyl group of 5-phosphorylribose-1-pyrophosphate (PRPP) to anthranilate to yield N-(5'-phosphoribosyl)-anthranilate (PRA). This is Anthranilate phosphoribosyltransferase from Synechococcus sp. (strain CC9311).